Reading from the N-terminus, the 278-residue chain is Adenylate kinase (278 aa).

50–55 (GAGKGT) serves as a coordination point for ATP. Residues 70 to 99 (ATGDMLRAQVAKGTALGKQAKKIMNEGGLV) are NMP. AMP is bound by residues T71, R76, 97-99 (GLV), 126-129 (GFPR), and Q133. The interval 167–204 (GRLVHPASGRSYHRIFNPPKDDMKDDITGEPLVQRSDD) is LID. ATP-binding positions include R168 and 177–178 (SY). Residues R201 and R212 each coordinate AMP. An ATP-binding site is contributed by Q240.

This sequence belongs to the adenylate kinase family. AK2 subfamily. In terms of assembly, monomer.

Its subcellular location is the cytoplasm. It is found in the cytosol. The protein resides in the mitochondrion intermembrane space. It carries out the reaction AMP + ATP = 2 ADP. In terms of biological role, catalyzes the reversible transfer of the terminal phosphate group between ATP and AMP. Plays an important role in cellular energy homeostasis and in adenine nucleotide metabolism. Adenylate kinase activity is critical for regulation of the phosphate utilization and the AMP de novo biosynthesis pathways. This is Adenylate kinase (adk-1) from Neurospora crassa (strain ATCC 24698 / 74-OR23-1A / CBS 708.71 / DSM 1257 / FGSC 987).